A 107-amino-acid polypeptide reads, in one-letter code: C-X-C motif chemokine 3 (107 aa).

Residues 1–34 form the signal peptide; that stretch reads MAHATLSAAPSNPRLLRVALLLLLLVAASRRAAG. 2 disulfide bridges follow: cysteine 43–cysteine 69 and cysteine 45–cysteine 85.

The protein belongs to the intercrine alpha (chemokine CxC) family. Post-translationally, N-terminal processed form GRO-gamma(5-73) is produced by proteolytic cleavage after secretion from peripheral blood monocytes.

Its subcellular location is the secreted. Its function is as follows. Ligand for CXCR2. Has chemotactic activity for neutrophils. May play a role in inflammation and exert its effects on endothelial cells in an autocrine fashion. In vitro, the processed form GRO-gamma(5-73) shows a fivefold higher chemotactic activity for neutrophilic granulocytes. The protein is C-X-C motif chemokine 3 (CXCL3) of Homo sapiens (Human).